A 189-amino-acid polypeptide reads, in one-letter code: Probable chorismate pyruvate-lyase (189 aa).

Residues R77, L115, and E174 each contribute to the substrate site.

This sequence belongs to the UbiC family.

It is found in the cytoplasm. It carries out the reaction chorismate = 4-hydroxybenzoate + pyruvate. The protein operates within cofactor biosynthesis; ubiquinone biosynthesis. In terms of biological role, removes the pyruvyl group from chorismate, with concomitant aromatization of the ring, to provide 4-hydroxybenzoate (4HB) for the ubiquinone pathway. The sequence is that of Probable chorismate pyruvate-lyase from Shewanella sp. (strain MR-7).